Consider the following 377-residue polypeptide: MGAAVTLNRIKIAPGIADIRDKYMELGFNYPEYNRAVKFAEESYTYYYETSPGEIKPKFCLIDGMSIDHCSSFIVPEFAKQYVLIHGEPCSSFKFRPGSLIYYQNEVTPEYIKDLKHATDYIASGQRCHFIKKDYLLGDSDSVAKCCSKTNTKHCPKIFNNNYKTEHCDDFMTGFCRNDPGNPNCLEWLRAKRKPAMSTYSDICSKHMDARYCSEFIRIIRPDYFTFGDTALYVFCNDHKGNRNCWCANYPKSNSGDKYLGPRVCWLHECTDESRDRKWLYYNQDVQRTRCKYVGCTINVNSLALKNSQAELTSNCTRTTSAVGDVHPGEPVVKDKIKLPTWLGAAITLVVISVIFYFISIYSRTKIKTNDINVRRR.

Glycine 2 carries N-myristoyl glycine; by host lipidation. Residues 2–341 (GAAVTLNRIK…VVKDKIKLPT (340 aa)) are Virion surface-facing. The chain crosses the membrane as a helical; Signal-anchor for type II membrane protein span at residues 342 to 362 (WLGAAITLVVISVIFYFISIY). The Intravirion segment spans residues 363-377 (SRTKIKTNDINVRRR).

The protein belongs to the poxviridae A16/G9/J5 family. As to quaternary structure, part of a stable entry-fusion complex (EFC) which is at least composed of proteins A16, A21, A28, G3, G9, H2, J5, and L5. Formation of the viral membrane is necessary for the assembly of the complex. Interacts with G9. In terms of processing, most cysteines are linked by disulfide bonds. They are created by the viral disulfide bond formation pathway, a poxvirus-specific redox pathway that operates on the cytoplasmic side of the MV membranes.

It localises to the virion membrane. Its function is as follows. Envelope protein part of the entry-fusion complex responsible for the virus membrane fusion with host cell membrane during virus entry. Also plays a role in cell-cell fusion (syncytium formation). The polypeptide is Virion membrane protein A16 (Homo sapiens (Human)).